The following is a 519-amino-acid chain: Matrix metalloproteinase-B (519 aa).

A signal peptide spans 1 to 26; it reads MTKWSPNGNPLSTIYLILSLFTLAHT. A propeptide spans 27-126 (activation peptide); it reads APTTQHSRTT…RQEQTKRTKR (100 aa). Residues 29 to 39 are compositionally biased toward polar residues; that stretch reads TTQHSRTTTQL. Residues 29–50 are disordered; it reads TTQHSRTTTQLRLEDEDGGGGV. Positions 109-116 match the Cysteine switch motif; it reads PRCTQTDV. 6 residues coordinate Zn(2+): Cys111, His208, Asp210, His232, His247, and His276. Glu277 is an active-site residue. 2 residues coordinate Zn(2+): His280 and His286. Asn341 carries an N-linked (GlcNAc...) asparagine glycan. Residues 391 to 402 are compositionally biased toward basic and acidic residues; sequence KDKRSYRGDSKI. Residues 391-410 form a disordered region; that stretch reads KDKRSYRGDSKIPKCSSNNS. N-linked (GlcNAc...) asparagine glycosylation is present at Asn408.

It belongs to the peptidase M10A family. It depends on Zn(2+) as a cofactor. As to expression, expressed in spermatheca and spermathecal-uterine valve, weakly in vulva and anal muscles and in two cells in the head (probably RMEV and RMED motor neurons).

It is found in the secreted. It localises to the extracellular space. The protein resides in the extracellular matrix. Its activity is regulated as follows. Inhibited by human TIMP1 and TIMP2 and the broad MMP inhibitors BB94 (Batimastat) and CT543. In terms of biological role, metalloprotease involved in molting, a process during larval stages in which a new cuticle is formed and the old cuticle is shed. Plays a role in thermotolerance probably by preventing the accumulation of oxidized lipoproteins and cholesterol. This is Matrix metalloproteinase-B from Caenorhabditis elegans.